We begin with the raw amino-acid sequence, 296 residues long: MSKLVLTTDFPDLKLAARGKVRDIYDLGETLLIVTTDRISAFDVIMNEGIPDKGYVLTQISAFWFRQMEDIIPNHIISTEVKDFPAECQKYADVLEGRSMLVKKAKPLPAECIVRGYISGSGWKDYQATGSVCGITLPAGLKESDRLPEPIFTPSTKAELGTHDENISFEKMVDMCGKDIAEKVRDITLKIYKKARDIADGKGIIIADTKFEYGIYEGELIIIDECMTPDSSRFWPKDSYQPGGPQPSFDKQFLRDYLETLDWDKTAPAPPLPEEIVRKTGEKYMEALVKLTGKGK.

This sequence belongs to the SAICAR synthetase family.

The enzyme catalyses 5-amino-1-(5-phospho-D-ribosyl)imidazole-4-carboxylate + L-aspartate + ATP = (2S)-2-[5-amino-1-(5-phospho-beta-D-ribosyl)imidazole-4-carboxamido]succinate + ADP + phosphate + 2 H(+). It functions in the pathway purine metabolism; IMP biosynthesis via de novo pathway; 5-amino-1-(5-phospho-D-ribosyl)imidazole-4-carboxamide from 5-amino-1-(5-phospho-D-ribosyl)imidazole-4-carboxylate: step 1/2. The protein is Phosphoribosylaminoimidazole-succinocarboxamide synthase of Geotalea uraniireducens (strain Rf4) (Geobacter uraniireducens).